We begin with the raw amino-acid sequence, 435 residues long: Serine--tRNA ligase (435 aa).

237–239 (TAE) is a binding site for L-serine. 268–270 (RSE) is a binding site for ATP. Glu-291 contributes to the L-serine binding site. 355-358 (EISS) lines the ATP pocket. Ser-390 contributes to the L-serine binding site.

The protein belongs to the class-II aminoacyl-tRNA synthetase family. Type-1 seryl-tRNA synthetase subfamily. In terms of assembly, homodimer. The tRNA molecule binds across the dimer.

It is found in the cytoplasm. The enzyme catalyses tRNA(Ser) + L-serine + ATP = L-seryl-tRNA(Ser) + AMP + diphosphate + H(+). It carries out the reaction tRNA(Sec) + L-serine + ATP = L-seryl-tRNA(Sec) + AMP + diphosphate + H(+). The protein operates within aminoacyl-tRNA biosynthesis; selenocysteinyl-tRNA(Sec) biosynthesis; L-seryl-tRNA(Sec) from L-serine and tRNA(Sec): step 1/1. Its function is as follows. Catalyzes the attachment of serine to tRNA(Ser). Is also able to aminoacylate tRNA(Sec) with serine, to form the misacylated tRNA L-seryl-tRNA(Sec), which will be further converted into selenocysteinyl-tRNA(Sec). The sequence is that of Serine--tRNA ligase from Lactobacillus delbrueckii subsp. bulgaricus (strain ATCC BAA-365 / Lb-18).